Consider the following 321-residue polypeptide: Mechanosensory protein 3 (321 aa).

LIM zinc-binding domains follow at residues 27-86 (NKCN…DHSI) and 87-152 (HRCA…QMDD). The homeobox DNA-binding region spans 217–276 (RRGPRTTIKQNQLDVLNEMFSNTPKPSKHARAKLALETGLSMRVIQVWFQNRRSKERRLK).

In terms of assembly, interacts with unc-86; the heterooligomer binds to the promoters of mec-3, mec-4 and mec-7. In terms of tissue distribution, expressed in the mechanosensory neurons ALML, ALMR, PLML, PLMR, AVM and PVM, and the FLPL and FLPR neurons.

The protein resides in the nucleus. Transcription factor. Specifies differentiation of the set of six touch receptor neurons (TRNs). May positively modulate expression of both its own gene and also of homeobox ARX homolog alr-1 in TRNs, forming a positive feedback loop with alr-1, thereby restricting the variability of expression of mec-3. Required to determine the identity of ALM sensory neurons, acting by interacting with unc-86, thereby preventing unc-86 cooperating with pag-3 to induce BDU-neuron specific genes. Binds cooperatively as a heterodimer with unc-86 to sites in the mec-3 gene promoter. Promotes outgrowth of lateral dendritic branches on the PVD nociceptive neurons, probably acting both directly, and upstream of zinc finger protein egl-46. The protein is Mechanosensory protein 3 (mec-3) of Caenorhabditis elegans.